A 247-amino-acid chain; its full sequence is Cytochrome c oxidase subunit 2 (247 aa).

Over 12–38 the chain is Mitochondrial intermembrane; it reads DVPTPWGLYFQDSSTPNQEGIIELHDN. Residues 39-59 form a helical membrane-spanning segment; that stretch reads IMFYLVLILCTVSWLLFSIVK. Over 60-78 the chain is Mitochondrial matrix; the sequence is DSSKNPLPHKYLVHGQTIE. A helical membrane pass occupies residues 79–101; that stretch reads IIWTILPAVVLLIIAFPSFILLY. The Mitochondrial intermembrane segment spans residues 102–247; that stretch reads LCDEVISPAM…KEFLTWLNEQ (146 aa). Residues histidine 182, cysteine 217, glutamate 219, cysteine 221, histidine 225, and methionine 228 each coordinate Cu cation. Glutamate 219 provides a ligand contact to Mg(2+).

This sequence belongs to the cytochrome c oxidase subunit 2 family. In terms of assembly, component of the cytochrome c oxidase (complex IV, CIV), a multisubunit enzyme composed of a catalytic core of 3 subunits and several supernumerary subunits. The complex exists as a monomer or a dimer and forms supercomplexes (SCs) in the inner mitochondrial membrane with ubiquinol-cytochrome c oxidoreductase (cytochrome b-c1 complex, complex III, CIII). Requires Cu cation as cofactor. Post-translationally, the signal sequence of COX2 is processed by IMP1.

Its subcellular location is the mitochondrion inner membrane. It carries out the reaction 4 Fe(II)-[cytochrome c] + O2 + 8 H(+)(in) = 4 Fe(III)-[cytochrome c] + 2 H2O + 4 H(+)(out). Functionally, component of the cytochrome c oxidase, the last enzyme in the mitochondrial electron transport chain which drives oxidative phosphorylation. The respiratory chain contains 3 multisubunit complexes succinate dehydrogenase (complex II, CII), ubiquinol-cytochrome c oxidoreductase (cytochrome b-c1 complex, complex III, CIII) and cytochrome c oxidase (complex IV, CIV), that cooperate to transfer electrons derived from NADH and succinate to molecular oxygen, creating an electrochemical gradient over the inner membrane that drives transmembrane transport and the ATP synthase. Cytochrome c oxidase is the component of the respiratory chain that catalyzes the reduction of oxygen to water. Electrons originating from reduced cytochrome c in the intermembrane space (IMS) are transferred via the dinuclear copper A center (CU(A)) of subunit 2 and heme A of subunit 1 to the active site in subunit 1, a binuclear center (BNC) formed by heme A3 and copper B (CU(B)). The BNC reduces molecular oxygen to 2 water molecules using 4 electrons from cytochrome c in the IMS and 4 protons from the mitochondrial matrix. The chain is Cytochrome c oxidase subunit 2 (COX2) from Cyberlindnera saturnus (Yeast).